Consider the following 633-residue polypeptide: DNA mismatch repair protein MutL (633 aa).

2 disordered regions span residues 337–364 and 383–405; these read RPDDQLAPPGATSLTEPRPTGAAAGEFG and VGWSGGSSASGGSSGYSAYTRPE. Residues 385–396 show a composition bias toward gly residues; it reads WSGGSSASGGSS.

Belongs to the DNA mismatch repair MutL/HexB family.

Its function is as follows. This protein is involved in the repair of mismatches in DNA. It is required for dam-dependent methyl-directed DNA mismatch repair. May act as a 'molecular matchmaker', a protein that promotes the formation of a stable complex between two or more DNA-binding proteins in an ATP-dependent manner without itself being part of a final effector complex. In Pseudomonas aeruginosa (strain LESB58), this protein is DNA mismatch repair protein MutL.